The chain runs to 134 residues: Large ribosomal subunit protein bL20 (134 aa).

It belongs to the bacterial ribosomal protein bL20 family.

Functionally, binds directly to 23S ribosomal RNA and is necessary for the in vitro assembly process of the 50S ribosomal subunit. It is not involved in the protein synthesizing functions of that subunit. The sequence is that of Large ribosomal subunit protein bL20 from Brucella anthropi (strain ATCC 49188 / DSM 6882 / CCUG 24695 / JCM 21032 / LMG 3331 / NBRC 15819 / NCTC 12168 / Alc 37) (Ochrobactrum anthropi).